Reading from the N-terminus, the 883-residue chain is Translation initiation factor IF-2 (883 aa).

The span at 32–45 shows a compositional bias: polar residues; sequence NDLNGKNNSNSSIN. Disordered stretches follow at residues 32-216 and 251-275; these read NDLN…QNKY and RKLG…AETE. Basic and acidic residues predominate over residues 46–62; sequence LDKHNNKVEYSQNRDNR. Polar residues predominate over residues 75–216; the sequence is GGYSQNRDNR…VGKNTSQNKY (142 aa). The segment covering 251-260 has biased composition (basic and acidic residues); sequence RKLGEKKKQQ. One can recognise a tr-type G domain in the interval 381–554; sequence EKPPVITIMG…DMMLLKANPS (174 aa). A G1 region spans residues 390 to 397; it reads GHVDHGKT. 390–397 is a binding site for GTP; the sequence is GHVDHGKT. The tract at residues 415–419 is G2; it reads GITQH. The G3 stretch occupies residues 436–439; it reads DTPG. Residues 436 to 440 and 490 to 493 contribute to the GTP site; these read DTPGH and NKID. Positions 490–493 are G4; it reads NKID. A G5 region spans residues 526-528; that stretch reads SAL.

It belongs to the TRAFAC class translation factor GTPase superfamily. Classic translation factor GTPase family. IF-2 subfamily.

The protein resides in the cytoplasm. In terms of biological role, one of the essential components for the initiation of protein synthesis. Protects formylmethionyl-tRNA from spontaneous hydrolysis and promotes its binding to the 30S ribosomal subunits. Also involved in the hydrolysis of GTP during the formation of the 70S ribosomal complex. The protein is Translation initiation factor IF-2 of Borrelia garinii subsp. bavariensis (strain ATCC BAA-2496 / DSM 23469 / PBi) (Borreliella bavariensis).